The primary structure comprises 510 residues: UDP-N-acetylmuramoyl-tripeptide--D-alanyl-D-alanine ligase (510 aa).

Residue 136–142 (GSSGKTS) coordinates ATP.

The protein belongs to the MurCDEF family. MurF subfamily.

The protein localises to the cytoplasm. The enzyme catalyses D-alanyl-D-alanine + UDP-N-acetyl-alpha-D-muramoyl-L-alanyl-gamma-D-glutamyl-meso-2,6-diaminopimelate + ATP = UDP-N-acetyl-alpha-D-muramoyl-L-alanyl-gamma-D-glutamyl-meso-2,6-diaminopimeloyl-D-alanyl-D-alanine + ADP + phosphate + H(+). It participates in cell wall biogenesis; peptidoglycan biosynthesis. Its function is as follows. Involved in cell wall formation. Catalyzes the final step in the synthesis of UDP-N-acetylmuramoyl-pentapeptide, the precursor of murein. The chain is UDP-N-acetylmuramoyl-tripeptide--D-alanyl-D-alanine ligase from Mycobacterium bovis (strain ATCC BAA-935 / AF2122/97).